We begin with the raw amino-acid sequence, 150 residues long: 3-dehydroquinate dehydratase (150 aa).

Catalysis depends on Tyr26, which acts as the Proton acceptor. Asn77, His83, and Asp90 together coordinate substrate. His103 acts as the Proton donor in catalysis. Residues Leu104–Ser105 and Arg114 each bind substrate.

This sequence belongs to the type-II 3-dehydroquinase family. In terms of assembly, homododecamer.

The enzyme catalyses 3-dehydroquinate = 3-dehydroshikimate + H2O. The protein operates within metabolic intermediate biosynthesis; chorismate biosynthesis; chorismate from D-erythrose 4-phosphate and phosphoenolpyruvate: step 3/7. Catalyzes a trans-dehydration via an enolate intermediate. This Klebsiella pneumoniae (strain 342) protein is 3-dehydroquinate dehydratase.